Here is a 140-residue protein sequence, read N- to C-terminus: Nucleoside diphosphate kinase (140 aa).

Residues Lys-11, Phe-59, Arg-87, Thr-93, Arg-104, and Asn-114 each contribute to the ATP site. The active-site Pros-phosphohistidine intermediate is the His-117.

The protein belongs to the NDK family. In terms of assembly, homotetramer. Requires Mg(2+) as cofactor.

The protein localises to the cytoplasm. It catalyses the reaction a 2'-deoxyribonucleoside 5'-diphosphate + ATP = a 2'-deoxyribonucleoside 5'-triphosphate + ADP. The enzyme catalyses a ribonucleoside 5'-diphosphate + ATP = a ribonucleoside 5'-triphosphate + ADP. In terms of biological role, major role in the synthesis of nucleoside triphosphates other than ATP. The ATP gamma phosphate is transferred to the NDP beta phosphate via a ping-pong mechanism, using a phosphorylated active-site intermediate. This Nitrobacter hamburgensis (strain DSM 10229 / NCIMB 13809 / X14) protein is Nucleoside diphosphate kinase.